The following is a 136-amino-acid chain: Peptide methionine sulfoxide reductase MsrB (136 aa).

In terms of domain architecture, MsrB spans 13 to 135 (ENDWRSKLTP…NSASLDFKDK (123 aa)). The Zn(2+) site is built by Cys-52, Cys-55, Cys-101, and Cys-104. Cys-124 serves as the catalytic Nucleophile.

Belongs to the MsrB Met sulfoxide reductase family. Zn(2+) is required as a cofactor.

It carries out the reaction L-methionyl-[protein] + [thioredoxin]-disulfide + H2O = L-methionyl-(R)-S-oxide-[protein] + [thioredoxin]-dithiol. The protein is Peptide methionine sulfoxide reductase MsrB of Synechococcus sp. (strain RCC307).